The chain runs to 505 residues: MAKKPTALIILDGFANRESEHGNAVKLANKPNFDRYYNKYPTTQIEASGLDVGLPEGQMGNSEVGHMNIGAGRIVYQSLTRINKSIEDGDFFENDVLNNAIAHVNSHDSALHIFGLLSDGGVHSHYKHLFALLELAKKQGVEKVYVHAFLDGRDVDQKSALKYIEETEAKFNELGIGQFASVSGRYYAMDRDKRWEREEKAYNAIRNFDAPTYATAKEGVEASYNEGLTDEFVVPFIVENQNDGVNDGDTVIFYNFRPDRAAQLSEIFANRAFEGFKVEQVKDLFYATFTKYNDNIDAAIVFEKVDLNNTIGEIAQNNNLTQLRIAETEKYPHVTYFMSGGRNEEFKGERRRLIDSPKVATYDLKPEMSAYEVKDALLEELNKGDLDLIILNFANPDMVGHSGMLEPTIKAIEAVDECLGEVVDKILDMDGYAIITADHGNSDQVLTDDDQPMTTHTTNPVPVIVTKEGVTLRETGRLGDLAPTLLDLLNVEQPEDMTGESLIKH.

Mn(2+) is bound by residues Asp12 and Ser62. Ser62 serves as the catalytic Phosphoserine intermediate. Substrate contacts are provided by residues His123, 153-154 (RD), Arg185, Arg191, 257-260 (RPDR), and Lys330. Positions 397, 401, 438, 439, and 456 each coordinate Mn(2+).

The protein belongs to the BPG-independent phosphoglycerate mutase family. As to quaternary structure, monomer. It depends on Mn(2+) as a cofactor.

It carries out the reaction (2R)-2-phosphoglycerate = (2R)-3-phosphoglycerate. It participates in carbohydrate degradation; glycolysis; pyruvate from D-glyceraldehyde 3-phosphate: step 3/5. In terms of biological role, catalyzes the interconversion of 2-phosphoglycerate and 3-phosphoglycerate. This Staphylococcus aureus (strain Mu50 / ATCC 700699) protein is 2,3-bisphosphoglycerate-independent phosphoglycerate mutase.